Reading from the N-terminus, the 348-residue chain is Chloroacetanilide N-alkylformylase, oxygenase component (348 aa).

The Rieske domain maps to 7–108 (WYAVAWCDEV…ARERHKLIWA (102 aa)). Cysteine 47, histidine 49, cysteine 66, and histidine 69 together coordinate [2Fe-2S] cluster. Residues histidine 159 and histidine 164 each contribute to the Fe cation site. Residue histidine 250 coordinates substrate. Aspartate 293 serves as a coordination point for Fe cation.

In terms of assembly, the chloroacetanilide N-alkylformylase multicomponent enzyme system is composed of an oxygenase component (CndA) and an electron transfer component formed by a ferredoxin reductase (CndC1) and a ferredoxin (CndB1). In vitro, chloroacetanilide N-alkylformylase assays in which CndB1 is substituted for CndB2 demonstrate that the two enzymes possess nearly identical activities. Requires [2Fe-2S] cluster as cofactor.

It carries out the reaction butachlor + 2 reduced [2Fe-2S]-[ferredoxin] + O2 + 2 H(+) = butyl formate + N-(2,6-diethylphenyl)-2-chloroacetamide + 2 oxidized [2Fe-2S]-[ferredoxin] + H2O. It catalyses the reaction alachlor + 2 reduced [2Fe-2S]-[ferredoxin] + O2 + 2 H(+) = methyl formate + N-(2,6-diethylphenyl)-2-chloroacetamide + 2 oxidized [2Fe-2S]-[ferredoxin] + H2O. The enzyme catalyses acetochlor + 2 reduced [2Fe-2S]-[ferredoxin] + O2 + 2 H(+) = N-(2-ethyl-6-methylphenyl)-2-chloroacetamide + ethyl formate + 2 oxidized [2Fe-2S]-[ferredoxin] + H2O. Its activity is regulated as follows. Activity enhanced by Fe(2+) and Mg(2+) ions. Divalent cations such as Ca(2+), Cr(2+), Co(2+), and Mn(2+) show moderate inhibition of the enzyme, whereas heavy metal ions such as Ag(+), Cu(2+), Pb(2+), Hg(2+), Ni(2+) and Zn(2+) severely inhibit the activity. Its function is as follows. Component of the chloroacetanilide N-alkylformylase multicomponent enzyme system involved in the degradation of chloroacetanilide herbicides (N-alkoxyalkyl-N-chloroacetyl-substituted aniline derivatives). In vitro, catalyzes the N-dealkylation of butachlor, alachlor and acetochlor to yield 2-chloro-N-(2,6-diethylphenyl)acetamide (CDEPA) (for alachlor and butachlor) and 2-chloro-N-(2-methyl-6-ethylphenyl)acetamide (CMEPA) (for acetochlor). This is Chloroacetanilide N-alkylformylase, oxygenase component from Rhizorhabdus wittichii (strain DC-6 / KACC 16600) (Sphingomonas wittichii).